The chain runs to 308 residues: MARSGRNAPPSGISGADAPSKLHTLIDDFCEHLDLVVGRSAATIRGYRSDLYAMADTIEDIDNFSLPTLRQWLGIAVDEGKSRATLARRTASVKAFSSWAQKNGHLKADEAARLISPKITRDLPKILGEQQAGDFVENAASTNEEEFLRDSAILELLYATGMRVAELCGIDLSDIDYDRKMVRVLGKGNKERVVPFGESAHKALRNWLDVRDEMTEDPKALFVGVRGQRINARQVRRIVDRAAKVTGVDHLSPHSLRHTAATHLLDGGADLRQVQELLGHSSMQTTQIYTHVSNKRLLEAFNKAHPRA.

The Core-binding (CB) domain maps to Ser-20 to Gln-101. The Tyr recombinase domain occupies Asp-122 to Asn-302. Active-site residues include Arg-163, Lys-187, His-254, Arg-257, and His-280. Tyr-289 functions as the O-(3'-phospho-DNA)-tyrosine intermediate in the catalytic mechanism.

It belongs to the 'phage' integrase family. XerC subfamily. In terms of assembly, forms a cyclic heterotetrameric complex composed of two molecules of XerC and two molecules of XerD.

It is found in the cytoplasm. Site-specific tyrosine recombinase, which acts by catalyzing the cutting and rejoining of the recombining DNA molecules. The XerC-XerD complex is essential to convert dimers of the bacterial chromosome into monomers to permit their segregation at cell division. It also contributes to the segregational stability of plasmids. This chain is Tyrosine recombinase XerC, found in Corynebacterium glutamicum (strain ATCC 13032 / DSM 20300 / JCM 1318 / BCRC 11384 / CCUG 27702 / LMG 3730 / NBRC 12168 / NCIMB 10025 / NRRL B-2784 / 534).